The following is a 138-amino-acid chain: MAQMTVQIVTPDGLVYDHHAAFVSVKTIDGELGILPRHINTIAVLEVDQVKVRRVDDDKHIDWVAVNGGIIEIADNVITIVADSAERERDIDISRAERAKLRAEQEIEEAHDKHLIDQERRAKIALQRAINRINVGSK.

Belongs to the ATPase epsilon chain family. In terms of assembly, F-type ATPases have 2 components, CF(1) - the catalytic core - and CF(0) - the membrane proton channel. CF(1) has five subunits: alpha(3), beta(3), gamma(1), delta(1), epsilon(1). CF(0) has three main subunits: a, b and c.

The protein resides in the cell membrane. Produces ATP from ADP in the presence of a proton gradient across the membrane. This Streptococcus gordonii (strain Challis / ATCC 35105 / BCRC 15272 / CH1 / DL1 / V288) protein is ATP synthase epsilon chain.